Consider the following 944-residue polypeptide: Translation initiation factor IF-2 (944 aa).

Disordered stretches follow at residues 50–91 and 114–349; these read SAKT…FAGK and KVEV…VPAT. Basic and acidic residues-rich tracts occupy residues 75–86, 124–157, 164–185, and 199–233; these read ESAKKNKEDHPR, VVTE…ETKD, AEVK…EKKK, and KRAE…DNRR. Residues 267–280 show a composition bias toward polar residues; that stretch reads SSGSAPATDSFTPA. Residues 286–307 show a composition bias toward basic and acidic residues; sequence SRRDRDRKKSDNNRDNTKDGNR. Composition is skewed to polar residues over residues 317–331 and 338–348; these read NRNQ…NWNQ and YQNNQSSSVPA. Residues 443–614 form the tr-type G domain; the sequence is ERPAVVTIMG…LLVAEVQELK (172 aa). The interval 452–459 is G1; that stretch reads GHVDHGKT. 452–459 contributes to the GTP binding site; it reads GHVDHGKT. Positions 477 to 481 are G2; sequence GITQH. Residues 498-501 form a G3 region; sequence DTPG. GTP contacts are provided by residues 498-502 and 552-555; these read DTPGH and NKID. Residues 552-555 form a G4 region; sequence NKID. Positions 590–592 are G5; it reads SAK.

This sequence belongs to the TRAFAC class translation factor GTPase superfamily. Classic translation factor GTPase family. IF-2 subfamily.

It localises to the cytoplasm. One of the essential components for the initiation of protein synthesis. Protects formylmethionyl-tRNA from spontaneous hydrolysis and promotes its binding to the 30S ribosomal subunits. Also involved in the hydrolysis of GTP during the formation of the 70S ribosomal complex. The sequence is that of Translation initiation factor IF-2 (infB) from Lactococcus lactis subsp. lactis (strain IL1403) (Streptococcus lactis).